The chain runs to 368 residues: Galactoside 2-alpha-L-fucosyltransferase Sec1 (368 aa).

Residues 1–20 (MPSDSCLLSLTVLQRLRAIC) lie on the Cytoplasmic side of the membrane. Residues 21–41 (PPLSTFYLFFVIFVVSTIFHC) form a helical; Signal-anchor for type II membrane protein membrane-spanning segment. The Lumenal portion of the chain corresponds to 42-368 (HRRLGLVPAP…APKRHWGALL (327 aa)). N-linked (GlcNAc...) asparagine glycans are attached at residues Asn-195, Asn-289, and Asn-315.

It belongs to the glycosyltransferase 11 family.

Its subcellular location is the golgi apparatus. The protein resides in the golgi stack membrane. It catalyses the reaction a ganglioside GM1 + GDP-beta-L-fucose = a ganglioside Fuc-GM1 + GDP + H(+). Its pathway is protein modification; protein glycosylation. In terms of biological role, catalyzes the transfer of alpha 1,2-linked fucose to ganglioside GM1 and galacto-N-biose. The sequence is that of Galactoside 2-alpha-L-fucosyltransferase Sec1 from Mus musculus (Mouse).